Consider the following 738-residue polypeptide: MKEAKIENIDFGNALSERYLAYALSTIMSRSLPDVRDGLKPVHRRLLYAMLQLRLEPNSGYKKCARVVGDVIGKYHPHGDVAVYDTLVRLAQHFSLRYPLIDGQGNFGSIDGDNAAAMRYTESRMTEICMLLMEDIDKDTVDFRSTYDDSDLEPVIMPASFPNLLANGSEGIAVGMATNIPPHNLHELCDALLYLIDNPQAGINDIMNFIKGPDFPTGGIIIDKAEVINAAYTTGRGSFRVRSRWEKEELSYGTYQIVVTEIPYQIQKSKLIEQIAILLKDKKIPLISSIRDESTDIIRVVIEPRDRSCDPQIVMESLFKLTNLESRIQLNMNVIGSNNVPRVMNILEILQEFLVHRKNIIIRRSTYLLNKIKQRLEILKVLRIVYLNLDEIIEIIREEDEPKTIIMERFKISAIQVEVILNTRLRSLQKLEEHAIIDEHSNLQKQQAILEKILKNHKELWQIVKKEIKAVQTKFGLNTIIGARRTSFEEVDLTNQVVDITAFITKEPITIICSKMGWVRSLKGHNTDLSTIKYKEGDTEKFIIEAYTTDKILIISSKGRFFTLLADNISKGKGTGGVSIKLLVDIGNNDITNILVYKPNQLLLLASSIGKGFLVNSNEVIAQTKTGKQIMNIPEGYSCIACLPVNGDSIACIGESRRLLVFNIDEIPEMKKGQGVVLQRFKNAKLLDIKIFNKQDGLSWNDGTKIQLEKNIVAFLGKRGGFGTFPPIGFPKNNRFSP.

Positions 32–496 (LPDVRDGLKP…SFEEVDLTNQ (465 aa)) constitute a Topo IIA-type catalytic domain. Tyrosine 120 acts as the O-(5'-phospho-DNA)-tyrosine intermediate in catalysis.

Belongs to the type II topoisomerase GyrA/ParC subunit family. ParC type 1 subfamily. In terms of assembly, heterotetramer composed of ParC and ParE.

The protein resides in the cell membrane. The enzyme catalyses ATP-dependent breakage, passage and rejoining of double-stranded DNA.. Its function is as follows. Topoisomerase IV is essential for chromosome segregation. It relaxes supercoiled DNA. Performs the decatenation events required during the replication of a circular DNA molecule. The chain is DNA topoisomerase 4 subunit A from Rickettsia prowazekii (strain Madrid E).